We begin with the raw amino-acid sequence, 810 residues long: DNA gyrase subunit A (810 aa).

The Topo IIA-type catalytic domain occupies 36 to 502 (LPDVRDGLKP…EVLKTSMSDL (467 aa)). The active-site O-(5'-phospho-DNA)-tyrosine intermediate is Tyr124. Residues 529-535 (QGIGGKG) carry the GyrA-box motif.

It belongs to the type II topoisomerase GyrA/ParC subunit family. In terms of assembly, heterotetramer, composed of two GyrA and two GyrB chains. In the heterotetramer, GyrA contains the active site tyrosine that forms a transient covalent intermediate with DNA, while GyrB binds cofactors and catalyzes ATP hydrolysis.

The protein localises to the cytoplasm. It carries out the reaction ATP-dependent breakage, passage and rejoining of double-stranded DNA.. In terms of biological role, a type II topoisomerase that negatively supercoils closed circular double-stranded (ds) DNA in an ATP-dependent manner to modulate DNA topology and maintain chromosomes in an underwound state. Negative supercoiling favors strand separation, and DNA replication, transcription, recombination and repair, all of which involve strand separation. Also able to catalyze the interconversion of other topological isomers of dsDNA rings, including catenanes and knotted rings. Type II topoisomerases break and join 2 DNA strands simultaneously in an ATP-dependent manner. The chain is DNA gyrase subunit A from Borrelia hermsii (strain HS1 / DAH).